The following is a 102-amino-acid chain: uncharacterized protein (102 aa).

3 helical membrane-spanning segments follow: residues 1–21, 42–62, and 68–88; these read MVPL…LRPV, SIID…LILV, and SIHA…FSIV.

The protein localises to the membrane. This is an uncharacterized protein from Saccharomyces cerevisiae (strain ATCC 204508 / S288c) (Baker's yeast).